The primary structure comprises 208 residues: Imidazole glycerol phosphate synthase subunit HisH (208 aa).

The 206-residue stretch at 1 to 206 folds into the Glutamine amidotransferase type-1 domain; it reads MIVIIDYDTG…KEVIRSCKSS (206 aa). Residue Cys79 is the Nucleophile of the active site. Catalysis depends on residues His181 and Glu183.

Heterodimer of HisH and HisF.

It is found in the cytoplasm. The catalysed reaction is 5-[(5-phospho-1-deoxy-D-ribulos-1-ylimino)methylamino]-1-(5-phospho-beta-D-ribosyl)imidazole-4-carboxamide + L-glutamine = D-erythro-1-(imidazol-4-yl)glycerol 3-phosphate + 5-amino-1-(5-phospho-beta-D-ribosyl)imidazole-4-carboxamide + L-glutamate + H(+). It catalyses the reaction L-glutamine + H2O = L-glutamate + NH4(+). It participates in amino-acid biosynthesis; L-histidine biosynthesis; L-histidine from 5-phospho-alpha-D-ribose 1-diphosphate: step 5/9. Functionally, IGPS catalyzes the conversion of PRFAR and glutamine to IGP, AICAR and glutamate. The HisH subunit catalyzes the hydrolysis of glutamine to glutamate and ammonia as part of the synthesis of IGP and AICAR. The resulting ammonia molecule is channeled to the active site of HisF. This Listeria welshimeri serovar 6b (strain ATCC 35897 / DSM 20650 / CCUG 15529 / CIP 8149 / NCTC 11857 / SLCC 5334 / V8) protein is Imidazole glycerol phosphate synthase subunit HisH.